The primary structure comprises 269 residues: Short-chain dehydrogenase/reductase ABA4 (269 aa).

NADP(+) is bound by residues Ile-34, Asp-80, Arg-144, Tyr-174, Lys-178, Ile-207, and Thr-209. Tyr-174 acts as the Proton donor in catalysis. Residue Lys-178 is the Lowers pKa of active site Tyr of the active site.

It belongs to the short-chain dehydrogenases/reductases (SDR) family.

It participates in hormone biosynthesis. In terms of biological role, short-chain dehydrogenase/reductase involved in the biosynthesis of abscisic acid (ABA), a phytohormone that acts antagonistically toward salicylic acid (SA), jasmonic acid (JA) and ethylene (ETH) signaling, to impede plant defense responses. During pathogen-host interaction, ABA plays a dual role in disease severity by increasing plant susceptibility and accelerating pathogenesis in the fungus itself. The first step of the pathway catalyzes the reaction from farnesyl diphosphate to alpha-ionylideneethane performed by the alpha-ionylideneethane synthase ABA3 via a three-step reaction mechanism involving 2 neutral intermediates, beta-farnesene and allofarnesene. The cytochrome P450 monooxygenase ABA1 might then be involved in the conversion of alpha-ionylideneethane to alpha-ionylideneacetic acid. Alpha-ionylideneacetic acid is further converted to abscisic acid in 2 steps involving the cytochrome P450 monooxygenase ABA2 and the short-chain dehydrogenase/reductase ABA4, via the intermediates 1'-deoxy-ABA or 1',4'-trans-diol-ABA, depending on the order of action of these 2 enzymes. ABA2 is responsible for the hydroxylation of carbon atom C-1' and ABA4 might be involved in the oxidation of the C-4' carbon atom. The sequence is that of Short-chain dehydrogenase/reductase ABA4 (ABA4) from Pyricularia oryzae (strain Y34) (Rice blast fungus).